The sequence spans 192 residues: Imidazoleglycerol-phosphate dehydratase (192 aa).

It belongs to the imidazoleglycerol-phosphate dehydratase family.

The protein resides in the cytoplasm. It catalyses the reaction D-erythro-1-(imidazol-4-yl)glycerol 3-phosphate = 3-(imidazol-4-yl)-2-oxopropyl phosphate + H2O. It participates in amino-acid biosynthesis; L-histidine biosynthesis; L-histidine from 5-phospho-alpha-D-ribose 1-diphosphate: step 6/9. This Staphylococcus aureus (strain JH9) protein is Imidazoleglycerol-phosphate dehydratase.